The sequence spans 2809 residues: Fibrillin-3 (2809 aa).

The signal sequence occupies residues methionine 1–glycine 31. Positions arginine 32–arginine 48 are excised as a propeptide. One can recognise an EGF-like 1 domain in the interval glycine 147–glutamate 179. 3 disulfide bridges follow: cysteine 151-cysteine 161, cysteine 155-cysteine 167, and cysteine 169-cysteine 178. The TB 1 domain occupies glycine 185–isoleucine 237. An EGF-like 2; calcium-binding domain is found at aspartate 247–glutamate 288. Intrachain disulfides connect cysteine 251/cysteine 263, cysteine 258/cysteine 272, and cysteine 274/cysteine 287. Positions glycine 293–cysteine 346 constitute a TB 2 domain. Asparagine 406 carries an N-linked (GlcNAc...) asparagine glycan. In terms of domain architecture, EGF-like 3 spans threonine 408–isoleucine 448. 15 disulfides stabilise this stretch: cysteine 412-cysteine 424, cysteine 419-cysteine 433, cysteine 435-cysteine 447, cysteine 453-cysteine 463, cysteine 458-cysteine 472, cysteine 474-cysteine 487, cysteine 493-cysteine 505, cysteine 500-cysteine 514, cysteine 516-cysteine 529, cysteine 535-cysteine 546, cysteine 541-cysteine 555, cysteine 557-cysteine 570, cysteine 576-cysteine 587, cysteine 582-cysteine 596, and cysteine 598-cysteine 611. The region spanning aspartate 449 to valine 488 is the EGF-like 4; calcium-binding domain. An EGF-like 5; calcium-binding domain is found at aspartate 489–valine 530. Positions aspartate 531 to methionine 571 constitute an EGF-like 6; calcium-binding domain. The EGF-like 7; calcium-binding domain occupies aspartate 572 to valine 612. Residues serine 618–cysteine 670 enclose the TB 3 domain. The 42-residue stretch at aspartate 682–threonine 723 folds into the EGF-like 8; calcium-binding domain. 9 disulfide bridges follow: cysteine 686/cysteine 698, cysteine 693/cysteine 707, cysteine 709/cysteine 722, cysteine 728/cysteine 740, cysteine 735/cysteine 749, cysteine 751/cysteine 764, cysteine 770/cysteine 780, cysteine 775/cysteine 789, and cysteine 791/cysteine 804. The EGF-like 9; calcium-binding domain maps to aspartate 724–lysine 765. One can recognise an EGF-like 10; calcium-binding domain in the interval aspartate 766–leucine 805. The region spanning glycine 810–arginine 861 is the TB 4 domain. Positions aspartate 869–valine 910 constitute an EGF-like 11; calcium-binding domain. 3 disulfide bridges follow: cysteine 873/cysteine 885, cysteine 880/cysteine 894, and cysteine 896/cysteine 909. Residues glutamate 915–cysteine 966 form the TB 5 domain. The EGF-like 12; calcium-binding domain maps to aspartate 986–threonine 1027. 36 disulfide bridges follow: cysteine 990–cysteine 1002, cysteine 997–cysteine 1011, cysteine 1013–cysteine 1026, cysteine 1032–cysteine 1044, cysteine 1039–cysteine 1053, cysteine 1055–cysteine 1069, cysteine 1075–cysteine 1087, cysteine 1082–cysteine 1096, cysteine 1098–cysteine 1111, cysteine 1117–cysteine 1129, cysteine 1124–cysteine 1138, cysteine 1140–cysteine 1153, cysteine 1159–cysteine 1170, cysteine 1166–cysteine 1179, cysteine 1181–cysteine 1194, cysteine 1200–cysteine 1212, cysteine 1207–cysteine 1221, cysteine 1223–cysteine 1236, cysteine 1242–cysteine 1254, cysteine 1249–cysteine 1263, cysteine 1265–cysteine 1278, cysteine 1284–cysteine 1297, cysteine 1291–cysteine 1306, cysteine 1308–cysteine 1319, cysteine 1325–cysteine 1338, cysteine 1332–cysteine 1347, cysteine 1349–cysteine 1360, cysteine 1366–cysteine 1378, cysteine 1373–cysteine 1387, cysteine 1389–cysteine 1402, cysteine 1408–cysteine 1419, cysteine 1414–cysteine 1428, cysteine 1430–cysteine 1443, cysteine 1449–cysteine 1460, cysteine 1455–cysteine 1469, and cysteine 1471–cysteine 1484. Asparagine 1025 carries N-linked (GlcNAc...) asparagine glycosylation. Residues aspartate 1028–methionine 1070 enclose the EGF-like 13; calcium-binding domain. The region spanning aspartate 1071 to glutamate 1112 is the EGF-like 14; calcium-binding domain. The EGF-like 15; calcium-binding domain occupies aspartate 1113–valine 1154. One can recognise an EGF-like 16; calcium-binding domain in the interval aspartate 1155–alanine 1195. The region spanning aspartate 1196–valine 1237 is the EGF-like 17 domain. Residues aspartate 1238–serine 1279 enclose the EGF-like 18; calcium-binding domain. Residues aspartate 1280 to histidine 1320 form the EGF-like 19; calcium-binding domain. In terms of domain architecture, EGF-like 20; calcium-binding spans aspartate 1321–glutamate 1361. The region spanning aspartate 1362 to glutamine 1403 is the EGF-like 21; calcium-binding domain. In terms of domain architecture, EGF-like 22; calcium-binding spans aspartate 1404 to threonine 1444. A glycan (N-linked (GlcNAc...) asparagine) is linked at asparagine 1442. Residues aspartate 1445 to valine 1485 enclose the EGF-like 23; calcium-binding domain. The region spanning glycine 1490 to cysteine 1546 is the TB 6 domain. Asparagine 1538 carries an N-linked (GlcNAc...) asparagine glycan. The 42-residue stretch at aspartate 1563 to glutamate 1604 folds into the EGF-like 24; calcium-binding domain. 6 disulfide bridges follow: cysteine 1567-cysteine 1579, cysteine 1574-cysteine 1588, cysteine 1590-cysteine 1603, cysteine 1609-cysteine 1621, cysteine 1616-cysteine 1630, and cysteine 1632-cysteine 1645. The 42-residue stretch at aspartate 1605–methionine 1646 folds into the EGF-like 25; calcium-binding domain. An N-linked (GlcNAc...) asparagine glycan is attached at asparagine 1627. The 53-residue stretch at serine 1651–cysteine 1703 folds into the TB 7 domain. 2 N-linked (GlcNAc...) asparagine glycosylation sites follow: asparagine 1658 and asparagine 1668. In terms of domain architecture, EGF-like 26; calcium-binding spans aspartate 1721–glutamate 1762. 21 disulfides stabilise this stretch: cysteine 1725–cysteine 1737, cysteine 1732–cysteine 1746, cysteine 1748–cysteine 1761, cysteine 1767–cysteine 1780, cysteine 1774–cysteine 1789, cysteine 1791–cysteine 1803, cysteine 1809–cysteine 1821, cysteine 1816–cysteine 1830, cysteine 1832–cysteine 1845, cysteine 1851–cysteine 1861, cysteine 1856–cysteine 1870, cysteine 1872–cysteine 1884, cysteine 1890–cysteine 1903, cysteine 1898–cysteine 1912, cysteine 1914–cysteine 1927, cysteine 1933–cysteine 1945, cysteine 1940–cysteine 1954, cysteine 1956–cysteine 1967, cysteine 1973–cysteine 1985, cysteine 1980–cysteine 1994, and cysteine 1996–cysteine 2009. The 42-residue stretch at aspartate 1763–valine 1804 folds into the EGF-like 27; calcium-binding domain. The EGF-like 28 domain occupies glycine 1805–methionine 1846. Residues aspartate 1847 to valine 1885 enclose the EGF-like 29; calcium-binding domain. Asparagine 1858 is a glycosylation site (N-linked (GlcNAc...) asparagine). The EGF-like 30; calcium-binding domain maps to aspartate 1886 to valine 1928. Positions aspartate 1929–isoleucine 1968 constitute an EGF-like 31; calcium-binding domain. One can recognise an EGF-like 32; calcium-binding domain in the interval aspartate 1969–phenylalanine 2010. The TB 8 domain occupies serine 2015–cysteine 2068. Asparagine 2033 carries an N-linked (GlcNAc...) asparagine glycan. One can recognise an EGF-like 33; calcium-binding domain in the interval aspartate 2084–valine 2125. 15 cysteine pairs are disulfide-bonded: cysteine 2088/cysteine 2100, cysteine 2095/cysteine 2109, cysteine 2111/cysteine 2124, cysteine 2130/cysteine 2141, cysteine 2136/cysteine 2150, cysteine 2152/cysteine 2164, cysteine 2170/cysteine 2181, cysteine 2177/cysteine 2190, cysteine 2192/cysteine 2205, cysteine 2211/cysteine 2225, cysteine 2218/cysteine 2234, cysteine 2236/cysteine 2250, cysteine 2256/cysteine 2268, cysteine 2263/cysteine 2277, and cysteine 2279/cysteine 2292. One can recognise an EGF-like 34; calcium-binding domain in the interval aspartate 2126–glutamate 2165. The region spanning aspartate 2166 to arginine 2206 is the EGF-like 35; calcium-binding domain. The region spanning aspartate 2207–threonine 2251 is the EGF-like 36; calcium-binding domain. The 42-residue stretch at aspartate 2252–histidine 2293 folds into the EGF-like 37; calcium-binding domain. A TB 9 domain is found at glycine 2298–cysteine 2351. In terms of domain architecture, EGF-like 38; calcium-binding spans aspartate 2363–leucine 2404. Disulfide bonds link cysteine 2367/cysteine 2379, cysteine 2374/cysteine 2388, cysteine 2390/cysteine 2403, cysteine 2409/cysteine 2420, cysteine 2416/cysteine 2429, cysteine 2431/cysteine 2444, cysteine 2450/cysteine 2461, cysteine 2457/cysteine 2470, cysteine 2472/cysteine 2483, cysteine 2489/cysteine 2502, cysteine 2496/cysteine 2511, cysteine 2513/cysteine 2526, cysteine 2532/cysteine 2542, cysteine 2538/cysteine 2551, cysteine 2553/cysteine 2566, cysteine 2572/cysteine 2584, cysteine 2579/cysteine 2593, cysteine 2595/cysteine 2608, cysteine 2614/cysteine 2625, cysteine 2621/cysteine 2634, and cysteine 2636/cysteine 2648. The EGF-like 39; calcium-binding domain maps to aspartate 2405–lysine 2445. The 39-residue stretch at aspartate 2446–phenylalanine 2484 folds into the EGF-like 40; calcium-binding domain. In terms of domain architecture, EGF-like 41; calcium-binding spans aspartate 2485–glutamate 2527. The 40-residue stretch at aspartate 2528–valine 2567 folds into the EGF-like 42; calcium-binding domain. One can recognise an EGF-like 43; calcium-binding domain in the interval aspartate 2568–glutamine 2609. The region spanning glutamate 2610–valine 2649 is the EGF-like 44; calcium-binding domain. Asparagine 2713 carries N-linked (GlcNAc...) asparagine glycosylation.

It belongs to the fibrillin family. Probably forms intermolecular disulfide bonds either with other FBN3 molecules or with other components of the microfibrils. Predominantly expressed in connective tissues such as skeletal muscle, tendon, skin, perichondrium and periosteum. Highly expressed in fetal lung, brain, kidney. Expressed at low level in prostate, testis, mammary gland, uterus, ovary, placenta, bladder, adrenal gland, thyroid, fetal thymus, fetal liver, liver, fetal heart and heart.

It localises to the secreted. Its subcellular location is the extracellular space. The protein localises to the extracellular matrix. Functionally, fibrillins are structural components of 10-12 nm extracellular calcium-binding microfibrils, which occur either in association with elastin or in elastin-free bundles. Fibrillin-containing microfibrils provide long-term force bearing structural support. This is Fibrillin-3 (FBN3) from Homo sapiens (Human).